The following is a 440-amino-acid chain: MAVIQITSDDTWQIQADGHPLRGTLQVPGDKSISHRALMLGAMAEGTTQITGLLVGEDTCSTASCFRALGAEISPLNATAVTVQGLGMGRLQEPGDVMNAGNSGTTMRLLLGVLAAQTGRFFTLTGDASLRSRPMARVVTPLLQMGAQIWGRQHHSRAPLAILGQPLEPITYYSPIASAQVKSALLLAALHTEGTTLIREPHRSRDHSERMLQAFGARLSVDEATCTVSLEGPAVLKGQKVIVPGDISSAAFWLVAASIIPDSELLLTNVGVNPTRTGILDVLWAMGAEITLENERLVTGEPVADLRVRSARLKSTRIGGELIPRLIDEIPILAVAAAFAEGVTEIRDAAELRVKESDRLKAVATELQKMGAKVTELSDGLDIQGGGPLQGTHLETYGDHRMAMSLAIAALNAKGTSEIHNASAAAVSYPEFVTVLQQIA.

3-phosphoshikimate contacts are provided by Lys-31, Ser-32, and Arg-36. Lys-31 serves as a coordination point for phosphoenolpyruvate. Phosphoenolpyruvate is bound by residues Gly-104 and Arg-133. Residues Ser-178, Gln-180, Asp-328, and Lys-355 each contribute to the 3-phosphoshikimate site. Gln-180 provides a ligand contact to phosphoenolpyruvate. The Proton acceptor role is filled by Asp-328. The phosphoenolpyruvate site is built by Arg-359 and Arg-401.

It belongs to the EPSP synthase family. In terms of assembly, monomer.

It is found in the cytoplasm. The catalysed reaction is 3-phosphoshikimate + phosphoenolpyruvate = 5-O-(1-carboxyvinyl)-3-phosphoshikimate + phosphate. Its pathway is metabolic intermediate biosynthesis; chorismate biosynthesis; chorismate from D-erythrose 4-phosphate and phosphoenolpyruvate: step 6/7. Functionally, catalyzes the transfer of the enolpyruvyl moiety of phosphoenolpyruvate (PEP) to the 5-hydroxyl of shikimate-3-phosphate (S3P) to produce enolpyruvyl shikimate-3-phosphate and inorganic phosphate. This chain is 3-phosphoshikimate 1-carboxyvinyltransferase, found in Thermosynechococcus vestitus (strain NIES-2133 / IAM M-273 / BP-1).